An 87-amino-acid chain; its full sequence is Large ribosomal subunit protein bL27 (87 aa).

The segment at 1 to 21 is disordered; that stretch reads MAHKKAGGSSRNGRDSESKRL.

The protein belongs to the bacterial ribosomal protein bL27 family.

This chain is Large ribosomal subunit protein bL27, found in Paraburkholderia phytofirmans (strain DSM 17436 / LMG 22146 / PsJN) (Burkholderia phytofirmans).